Consider the following 453-residue polypeptide: MIPIIVLIGRTNVGKSTLFNVLTKTRDALVANYPGITRDRQYGYCKLQSNKKIILIDTAGLDIKLNEIEKQAQAQTLIAIKEAHLILFLVNARDGLMPQEYEISKNIRKYQKKTILVINKIDGINEASKINEFYSLGFEKIQKISASHNQGINTLINRYLIPWISEKFKKKITENLYKDTELKKIAIKVAFIGRPNVGKSTLINGILKEERMITSNTPGTTLDSISTPIKYNYENYTLIDTAGASKKKKKINDFQRFSIIKTLQTIEKSNVILLIIDASLQTCHQDLSLADFIIHSGKGIVVVVNKCDLFNSVELKKIKELIKSKLKFLYFSKIHFISALYKKGIFQLFKSIKESYEDSKRKISTSTLIKTMHIAIKKHQPPIIKGRRIKLKYAHLGSSNPPKIIIHGNQVKYLSLPYKRYLINFFYKTLKIKGTPIQIQFKDNENPYVKNKN.

2 consecutive EngA-type G domains span residues 3–167 (PIIV…ISEK) and 187–360 (IKVA…EDSK). GTP-binding positions include 9–16 (GRTNVGKS), 57–61 (DTAGL), 119–122 (NKID), 193–200 (GRPNVGKS), 240–244 (DTAGA), and 305–308 (NKCD). Residues 361–445 (RKISTSTLIK…PIQIQFKDNE (85 aa)) enclose the KH-like domain.

Belongs to the TRAFAC class TrmE-Era-EngA-EngB-Septin-like GTPase superfamily. EngA (Der) GTPase family. In terms of assembly, associates with the 50S ribosomal subunit.

In terms of biological role, GTPase that plays an essential role in the late steps of ribosome biogenesis. The polypeptide is GTPase Der (Buchnera aphidicola subsp. Acyrthosiphon pisum (strain 5A)).